We begin with the raw amino-acid sequence, 781 residues long: Probable serine/threonine-protein kinase C70.05c (781 aa).

2 disordered regions span residues 1 to 315 (MPSD…PLVS) and 368 to 417 (YSGK…TNIS). The segment covering 21 to 31 (ESPSSRSIGSG) has biased composition (low complexity). A compositionally biased stretch (polar residues) spans 43–63 (FKNSFLSRKNSSQIKSPSDYK). Residues 64-73 (SSAHEQRVNH) show a composition bias toward basic and acidic residues. Over residues 74 to 92 (TTDSMAHVPGNNSPLQTPQ) the composition is skewed to polar residues. Residue serine 94 is modified to Phosphoserine. Over residues 112-121 (SRHHKPHHSG) the composition is skewed to basic residues. Polar residues-rich tracts occupy residues 136 to 146 (SNANSPTSESP), 161 to 195 (KNTS…PNSR), and 206 to 228 (NSAS…SLSR). The residue at position 253 (serine 253) is a Phosphoserine. A compositionally biased stretch (low complexity) spans 272 to 304 (PLTASPTPSSPTGTPNSMSKSPSLSSLASTGAS). Polar residues predominate over residues 379-406 (NVGSSANTAPNSPTSANSSEGNQGNGPT). In terms of domain architecture, Protein kinase spans 432–742 (AKRVVPRLSA…AQEALNLPFV (311 aa)). Residues 452–460 (MGSGATAVI) and lysine 480 each bind ATP. Aspartate 584 (proton acceptor) is an active-site residue.

Belongs to the protein kinase superfamily. Ser/Thr protein kinase family.

The protein resides in the cytoplasm. The enzyme catalyses L-seryl-[protein] + ATP = O-phospho-L-seryl-[protein] + ADP + H(+). It carries out the reaction L-threonyl-[protein] + ATP = O-phospho-L-threonyl-[protein] + ADP + H(+). The protein is Probable serine/threonine-protein kinase C70.05c of Schizosaccharomyces pombe (strain 972 / ATCC 24843) (Fission yeast).